A 248-amino-acid polypeptide reads, in one-letter code: UPF0246 protein RF_0769 (248 aa).

Belongs to the UPF0246 family.

The polypeptide is UPF0246 protein RF_0769 (Rickettsia felis (strain ATCC VR-1525 / URRWXCal2) (Rickettsia azadi)).